The chain runs to 165 residues: Iron sulfur cluster assembly protein 1, mitochondrial (165 aa).

A mitochondrion-targeting transit peptide spans 1-27; the sequence is MLPVITRFARPALMAIRPVNAMGVLRA. The SSQ1 binding region stretch occupies residues 132–136; that stretch reads LPPVK.

It belongs to the NifU family. In terms of assembly, homodimer, but can exist as monomers or trimers. Oligomerization may be regulated by Zn(2+) availability. Component of the core Fe-S cluster (ISC) assembly machinery. Interacts with YFH1/frataxin with a 1 to 1 stoichiometry; the interaction is direct. Interacts with the mitochondrial co-chaperones JAC1 and SSQ1. Interacts with NFS1. Interacts with YAH1/ferredoxin; interacts with the reduced form. The cofactor is [2Fe-2S] cluster. Requires Zn(2+) as cofactor.

The protein resides in the mitochondrion matrix. It functions in the pathway cofactor biosynthesis; iron-sulfur cluster biosynthesis. Scaffold protein for the de novo synthesis of iron-sulfur (Fe-S) clusters within mitochondria, which is required for maturation of both mitochondrial and cytoplasmic [2Fe-2S] and [4Fe-4S] proteins. First, a [2Fe-2S] cluster is transiently assembled on the scaffold proteins ISU1 and ISU2. In a second step, the cluster is released from ISU1/ISU2, transferred to glutaredoxin GRX5, followed by the formation of mitochondrial [2Fe-2S] proteins, the synthesis of [4Fe-4S] clusters and their target-specific insertion into the recipient apoproteins. Cluster assembly on ISU1/ISU2 depends on the function of the cysteine desulfurase complex NFS1-ISD11, which serves as the sulfur donor for cluster synthesis, the iron-binding protein frataxin (YFH1) as the putative iron donor, and the electron transfer chain comprised of ferredoxin reductase ARH1 and ferredoxin YAH1, which receive their electrons from NADH. Fe-S cluster release from ISU1/ISU2 is achieved by interaction with the Hsp70 chaperone SSQ1, assisted by the DnaJ-like co-chaperone JAC1 and the nucleotide exchange factor MGE1. ISU1 is the major isoform in yeast, while ISU2 is not detectable in cells grown to stationary phase. Also involved in production of a sulfur precursor required for thiolation of cytoplasmic tRNAs. In Saccharomyces cerevisiae (strain ATCC 204508 / S288c) (Baker's yeast), this protein is Iron sulfur cluster assembly protein 1, mitochondrial.